Consider the following 776-residue polypeptide: Peregrinol diphosphate synthase CPS1, chloroplastic (776 aa).

The N-terminal 17 residues, 1-17 (MASTPTLNLSITTPFVR), are a transit peptide targeting the chloroplast. Substrate is bound at residue Lys-238. Asp-371 and Asp-373 together coordinate Mg(2+). A DXDD motif motif is present at residues 371-374 (DIDD). Substrate is bound at residue Lys-457.

It belongs to the terpene synthase family. It depends on Mg(2+) as a cofactor. Present in both leaves and flowers, with higher levels in leaves.

Its subcellular location is the plastid. It localises to the chloroplast. The enzyme catalyses peregrinol diphosphate = (2E,6E,10E)-geranylgeranyl diphosphate + H2O. It participates in secondary metabolite biosynthesis; terpenoid biosynthesis. Its function is as follows. Involved in the biosynthesis of labdane-type diterpenoid including marrubiin and other labdane-related furanoid diterpenoids with potential applications as anti-diabetics, analgesics or vasorelaxants. Terpene synthase that produces peregrinol diphosphate from geranylgeranyl diphosphate (GGPP). The sequence is that of Peregrinol diphosphate synthase CPS1, chloroplastic from Marrubium vulgare (White horehound).